We begin with the raw amino-acid sequence, 285 residues long: ATP phosphoribosyltransferase (285 aa).

It belongs to the ATP phosphoribosyltransferase family. Long subfamily. Requires Mg(2+) as cofactor.

Its subcellular location is the cytoplasm. It carries out the reaction 1-(5-phospho-beta-D-ribosyl)-ATP + diphosphate = 5-phospho-alpha-D-ribose 1-diphosphate + ATP. Its pathway is amino-acid biosynthesis; L-histidine biosynthesis; L-histidine from 5-phospho-alpha-D-ribose 1-diphosphate: step 1/9. With respect to regulation, feedback inhibited by histidine. Functionally, catalyzes the condensation of ATP and 5-phosphoribose 1-diphosphate to form N'-(5'-phosphoribosyl)-ATP (PR-ATP). Has a crucial role in the pathway because the rate of histidine biosynthesis seems to be controlled primarily by regulation of HisG enzymatic activity. The chain is ATP phosphoribosyltransferase from Streptomyces avermitilis (strain ATCC 31267 / DSM 46492 / JCM 5070 / NBRC 14893 / NCIMB 12804 / NRRL 8165 / MA-4680).